The sequence spans 125 residues: uncharacterized protein (125 aa).

3 helical membrane passes run 20–42, 57–76, and 81–103; these read RNGG…LTIL, LMNA…GVVV, and YLFV…YMAS.

It is found in the cell membrane. This is an uncharacterized protein from Archaeoglobus fulgidus (strain ATCC 49558 / DSM 4304 / JCM 9628 / NBRC 100126 / VC-16).